A 205-amino-acid polypeptide reads, in one-letter code: HTH-type transcriptional regulator LuxR (205 aa).

In terms of domain architecture, HTH tetR-type spans 15 to 75 (LKRKQQLMEI…EVLNHVVRQF (61 aa)). The segment at residues 39–58 (HADIAEIAQVSVATVFNYFP) is a DNA-binding region (H-T-H motif).

Its function is as follows. Regulatory protein of bacterial bioluminescence. It probably binds the autoinducer molecule and potentiates the transcription of the bioluminescence operon. The chain is HTH-type transcriptional regulator LuxR (luxR) from Vibrio harveyi (Beneckea harveyi).